The following is a 250-amino-acid chain: Probable dihydroorotate dehydrogenase B (NAD(+)), electron transfer subunit (250 aa).

The FAD-binding FR-type domain occupies 1–89 (MNRITVDQVR…RGPYGNGFQI (89 aa)). Positions 200, 205, 208, and 216 each coordinate [2Fe-2S] cluster.

It belongs to the PyrK family. Heterotetramer of 2 PyrK and 2 PyrD type B subunits. Requires [2Fe-2S] cluster as cofactor. The cofactor is FAD.

Its pathway is pyrimidine metabolism; UMP biosynthesis via de novo pathway; orotate from (S)-dihydroorotate (NAD(+) route): step 1/1. In terms of biological role, responsible for channeling the electrons from the oxidation of dihydroorotate from the FMN redox center in the PyrD type B subunit to the ultimate electron acceptor NAD(+). This Thermoplasma acidophilum (strain ATCC 25905 / DSM 1728 / JCM 9062 / NBRC 15155 / AMRC-C165) protein is Probable dihydroorotate dehydrogenase B (NAD(+)), electron transfer subunit.